The primary structure comprises 157 residues: Endoribonuclease YbeY (157 aa).

Positions 111, 115, and 121 each coordinate Zn(2+). The interval 136 to 157 (ELLAELGHPDPYADDETDSITH) is disordered. The span at 147 to 157 (YADDETDSITH) shows a compositional bias: acidic residues.

Belongs to the endoribonuclease YbeY family. Zn(2+) is required as a cofactor.

It localises to the cytoplasm. Its function is as follows. Single strand-specific metallo-endoribonuclease involved in late-stage 70S ribosome quality control and in maturation of the 3' terminus of the 16S rRNA. This Pseudomonas putida (strain ATCC 700007 / DSM 6899 / JCM 31910 / BCRC 17059 / LMG 24140 / F1) protein is Endoribonuclease YbeY.